We begin with the raw amino-acid sequence, 222 residues long: 3-dehydroquinate dehydratase (222 aa).

Residues 29–31 (ELR) and R55 each bind 3-dehydroquinate. The active-site Proton donor/acceptor is H112. Residue K139 is the Schiff-base intermediate with substrate of the active site. The 3-dehydroquinate site is built by R178, S199, and Q203.

The protein belongs to the type-I 3-dehydroquinase family. In terms of assembly, homodimer.

It catalyses the reaction 3-dehydroquinate = 3-dehydroshikimate + H2O. The protein operates within metabolic intermediate biosynthesis; chorismate biosynthesis; chorismate from D-erythrose 4-phosphate and phosphoenolpyruvate: step 3/7. In terms of biological role, involved in the third step of the chorismate pathway, which leads to the biosynthesis of aromatic amino acids. Catalyzes the cis-dehydration of 3-dehydroquinate (DHQ) and introduces the first double bond of the aromatic ring to yield 3-dehydroshikimate. This Dehalococcoides mccartyi (strain ATCC BAA-2100 / JCM 16839 / KCTC 5957 / BAV1) protein is 3-dehydroquinate dehydratase.